A 455-amino-acid chain; its full sequence is Ribulose bisphosphate carboxylase large chain (455 aa).

K5 is subject to N6,N6,N6-trimethyllysine. Residues N114 and T164 each contribute to the substrate site. Residue K166 is the Proton acceptor of the active site. K168 contacts substrate. Mg(2+) is bound by residues K192, D194, and E195. N6-carboxylysine is present on K192. Catalysis depends on H285, which acts as the Proton acceptor. Substrate-binding residues include R286, H318, and S370.

It belongs to the RuBisCO large chain family. Type I subfamily. As to quaternary structure, heterohexadecamer of 8 large chains and 8 small chains; disulfide-linked. The disulfide link is formed within the large subunit homodimers. Mg(2+) is required as a cofactor. Post-translationally, the disulfide bond which can form in the large chain dimeric partners within the hexadecamer appears to be associated with oxidative stress and protein turnover.

It is found in the plastid. It localises to the chloroplast. It carries out the reaction 2 (2R)-3-phosphoglycerate + 2 H(+) = D-ribulose 1,5-bisphosphate + CO2 + H2O. It catalyses the reaction D-ribulose 1,5-bisphosphate + O2 = 2-phosphoglycolate + (2R)-3-phosphoglycerate + 2 H(+). RuBisCO catalyzes two reactions: the carboxylation of D-ribulose 1,5-bisphosphate, the primary event in carbon dioxide fixation, as well as the oxidative fragmentation of the pentose substrate in the photorespiration process. Both reactions occur simultaneously and in competition at the same active site. This chain is Ribulose bisphosphate carboxylase large chain, found in Lupinus nanus (Sky lupine).